The primary structure comprises 315 residues: Cytochrome c biogenesis protein CcsA (315 aa).

7 consecutive transmembrane segments (helical) span residues 17–37 (LGFA…WAVA), 72–92 (ISNL…AQLF), 101–121 (IVSA…SFVL), 146–166 (VIMC…GVFL), 221–241 (SITA…VWAN), 255–272 (TWAL…HTRI), and 282–302 (AILA…VNLL).

Belongs to the CcmF/CycK/Ccl1/NrfE/CcsA family. As to quaternary structure, may interact with ccs1.

The protein localises to the cellular thylakoid membrane. Required during biogenesis of c-type cytochromes (cytochrome c6 and cytochrome f) at the step of heme attachment. In Prochlorococcus marinus (strain NATL2A), this protein is Cytochrome c biogenesis protein CcsA.